The chain runs to 341 residues: Sulfate/thiosulfate import ATP-binding protein CysA 2 (341 aa).

One can recognise an ABC transporter domain in the interval 3-235; sequence IRLENVVKTF…PNSSFVMRFL (233 aa). 35–42 contributes to the ATP binding site; it reads GPSGSGKT.

Belongs to the ABC transporter superfamily. Sulfate/tungstate importer (TC 3.A.1.6) family. In terms of assembly, the complex is composed of two ATP-binding proteins (CysA), two transmembrane proteins (CysT and CysW) and a solute-binding protein (CysP).

It localises to the cell inner membrane. The enzyme catalyses sulfate(out) + ATP + H2O = sulfate(in) + ADP + phosphate + H(+). The catalysed reaction is thiosulfate(out) + ATP + H2O = thiosulfate(in) + ADP + phosphate + H(+). Part of the ABC transporter complex CysAWTP involved in sulfate/thiosulfate import. Responsible for energy coupling to the transport system. The polypeptide is Sulfate/thiosulfate import ATP-binding protein CysA 2 (Agrobacterium fabrum (strain C58 / ATCC 33970) (Agrobacterium tumefaciens (strain C58))).